Consider the following 104-residue polypeptide: Cell cycle protein GpsB (104 aa).

Positions 34–72 form a coiled coil; sequence LDVVIQDYEVFQKKIERLEQEIHQLRTEAKRAASERQTR. The segment covering 60–71 has biased composition (basic and acidic residues); it reads TEAKRAASERQT. Residues 60–82 form a disordered region; that stretch reads TEAKRAASERQTRHQTSPSVGST. Polar residues predominate over residues 73-82; the sequence is HQTSPSVGST.

This sequence belongs to the GpsB family. As to quaternary structure, forms polymers through the coiled coil domains. Interacts with PBP1, MreC and EzrA.

Its subcellular location is the cytoplasm. Divisome component that associates with the complex late in its assembly, after the Z-ring is formed, and is dependent on DivIC and PBP2B for its recruitment to the divisome. Together with EzrA, is a key component of the system that regulates PBP1 localization during cell cycle progression. Its main role could be the removal of PBP1 from the cell pole after pole maturation is completed. Also contributes to the recruitment of PBP1 to the division complex. Not essential for septum formation. The polypeptide is Cell cycle protein GpsB (Halalkalibacterium halodurans (strain ATCC BAA-125 / DSM 18197 / FERM 7344 / JCM 9153 / C-125) (Bacillus halodurans)).